Reading from the N-terminus, the 316-residue chain is Taste receptor type 2 member 3 (316 aa).

Residues 1–7 are Extracellular-facing; it reads MFGFIEG. The helical transmembrane segment at 8 to 28 threads the bilayer; it reads VFLVLTITEFILGNLVNGFIV. Residues 29–50 lie on the Cytoplasmic side of the membrane; that stretch reads SINSSYWFKSKKISLSNFIITS. A helical membrane pass occupies residues 51–71; it reads LALFRIFLLWIIFIDSLIIVF. Over 72 to 86 the chain is Extracellular; sequence SYQTHDSGIMMQLID. The chain crosses the membrane as a helical span at residues 87-107; the sequence is VFWTFTNHFSIWLISCLSVFY. Residues 108–128 are Cytoplasmic-facing; the sequence is CLKIASFSHPSFLWLKWRASR. A helical transmembrane segment spans residues 129 to 149; the sequence is VVVGMLWGALLLSCVSTMSLM. Residues 150–186 lie on the Extracellular side of the membrane; the sequence is NEFKIYSALTRSKDTPNMTEYIRLKRQEYNLMHVLGN. Asparagine 166 is a glycosylation site (N-linked (GlcNAc...) asparagine). The helical transmembrane segment at 187-207 threads the bilayer; the sequence is LWKIPSLIVSLVAYLLLLLSL. Residues 208-234 lie on the Cytoplasmic side of the membrane; it reads GKHTQQMQQYSIDSRDQSAEAHKRAMR. Residues 235–255 form a helical membrane-spanning segment; that stretch reads IISSFLLFFLFYFLSFMILSS. The Extracellular segment spans residues 256 to 266; that stretch reads SRFLPETRIAR. The helical transmembrane segment at 267-287 threads the bilayer; the sequence is IIGVVISMSYLVGDSFILIVC. Over 288–316 the chain is Cytoplasmic; sequence NNKLKHTFVAMLPCECGHLKPGSKGPSAS.

The protein belongs to the G-protein coupled receptor T2R family.

It is found in the membrane. In terms of biological role, gustducin-coupled receptor implicated in the perception of bitter compounds in the oral cavity and the gastrointestinal tract. Signals through PLCB2 and the calcium-regulated cation channel TRPM5. The polypeptide is Taste receptor type 2 member 3 (Tas2r3) (Mus musculus (Mouse)).